The sequence spans 185 residues: Ribosome-recycling factor (185 aa).

It belongs to the RRF family.

The protein localises to the cytoplasm. Functionally, responsible for the release of ribosomes from messenger RNA at the termination of protein biosynthesis. May increase the efficiency of translation by recycling ribosomes from one round of translation to another. This Aeromonas hydrophila subsp. hydrophila (strain ATCC 7966 / DSM 30187 / BCRC 13018 / CCUG 14551 / JCM 1027 / KCTC 2358 / NCIMB 9240 / NCTC 8049) protein is Ribosome-recycling factor.